A 150-amino-acid chain; its full sequence is Urease accessory protein UreE (150 aa).

Belongs to the UreE family.

The protein resides in the cytoplasm. Involved in urease metallocenter assembly. Binds nickel. Probably functions as a nickel donor during metallocenter assembly. This chain is Urease accessory protein UreE, found in Staphylococcus aureus (strain Mu3 / ATCC 700698).